The primary structure comprises 385 residues: 8-amino-7-oxononanoate synthase (385 aa).

Substrate is bound at residue Arg21. 108-109 (GF) lines the pyridoxal 5'-phosphate pocket. His133 lines the substrate pocket. Pyridoxal 5'-phosphate is bound by residues Ser179, His207, and Thr233. Lys236 carries the N6-(pyridoxal phosphate)lysine modification. Thr352 contributes to the substrate binding site.

This sequence belongs to the class-II pyridoxal-phosphate-dependent aminotransferase family. BioF subfamily. As to quaternary structure, homodimer. Pyridoxal 5'-phosphate is required as a cofactor.

It catalyses the reaction 6-carboxyhexanoyl-[ACP] + L-alanine + H(+) = (8S)-8-amino-7-oxononanoate + holo-[ACP] + CO2. It participates in cofactor biosynthesis; biotin biosynthesis. Its function is as follows. Catalyzes the decarboxylative condensation of pimeloyl-[acyl-carrier protein] and L-alanine to produce 8-amino-7-oxononanoate (AON), [acyl-carrier protein], and carbon dioxide. This chain is 8-amino-7-oxononanoate synthase, found in Salmonella choleraesuis (strain SC-B67).